The primary structure comprises 565 residues: Periplasmic trehalase (565 aa).

A signal peptide spans 1 to 30 (MKSPAPSRPQKMALIPACIFLCFAALSVQA). Substrate-binding positions include arginine 152, 159–160 (WD), asparagine 196, 205–207 (RSQ), 277–279 (RPE), and glycine 310. Residues aspartate 312 and glutamate 496 each act as proton donor/acceptor in the active site. Substrate is bound at residue glutamate 511. The segment at 539 to 565 (CDNVPATRPLSESTTQPVKQKEAEPTP) is disordered.

It belongs to the glycosyl hydrolase 37 family. As to quaternary structure, monomer.

The protein localises to the periplasm. The catalysed reaction is alpha,alpha-trehalose + H2O = alpha-D-glucose + beta-D-glucose. Its function is as follows. Provides the cells with the ability to utilize trehalose at high osmolarity by splitting it into glucose molecules that can subsequently be taken up by the phosphotransferase-mediated uptake system. This is Periplasmic trehalase from Escherichia coli O17:K52:H18 (strain UMN026 / ExPEC).